Here is a 691-residue protein sequence, read N- to C-terminus: Competence protein ComA (691 aa).

Transmembrane regions (helical) follow at residues 183-203, 220-240, 280-300, 322-342, 347-367, and 396-416; these read HLVS…AWLA, WVLA…GFSV, LAVL…LIWA, VLSL…SPLV, IPWF…VPFA, and VAAA…LLLL.

It to B.subtilis ComEC, H.influenzae REC2, and E.coli YcaI.

Its subcellular location is the cell inner membrane. Its function is as follows. Essential for natural transformation. Could be a transporter involved in DNA uptake. This is Competence protein ComA (comA) from Neisseria gonorrhoeae.